Here is a 568-residue protein sequence, read N- to C-terminus: Protein yellow (568 aa).

The first 28 residues, 1 to 28 (MHAQDKGGILPALSLLLIAVAMVSPSQA), serve as a signal peptide directing secretion. 2 N-linked (GlcNAc...) asparagine glycosylation sites follow: Asn-151 and Asn-222.

This sequence belongs to the major royal jelly protein family.

It localises to the secreted. Its function is as follows. Controls the pigmentation pattern of the adult cuticle and larval mouth parts. The protein is Protein yellow (y) of Drosophila madeirensis (Fruit fly).